The primary structure comprises 212 residues: Thymidylate kinase (212 aa).

10 to 17 (GIDGCGKT) is a binding site for ATP.

The protein belongs to the thymidylate kinase family.

It carries out the reaction dTMP + ATP = dTDP + ADP. Phosphorylation of dTMP to form dTDP in both de novo and salvage pathways of dTTP synthesis. In Prochlorococcus marinus (strain MIT 9301), this protein is Thymidylate kinase.